Consider the following 210-residue polypeptide: MNSLIMVIIALIAAYFIGSTPAPYLAGRIFKKIDIRTVGSKNMGSMNVFYNVGFWPGILVLTTDIGKGALAMAVANWLGEGLGIQMLCALMAIAGHNYPVWLKFKGGKGGATAIGILAYMMPEGIPIYIACFLILMAITRFPTLSYGISFISFILVAWLGQHDMGKVLFSLLVVMIPILMYIPRMKEIKNKAGSGNAKRAIFRRNLKERL.

Transmembrane regions (helical) follow at residues 4 to 24 (LIMV…PAPY), 52 to 72 (VGFW…ALAM), 73 to 93 (AVAN…LMAI), 114 to 134 (IGIL…CFLI), 141 to 161 (FPTL…WLGQ), and 163 to 183 (DMGK…MYIP).

It belongs to the PlsY family. Probably interacts with PlsX.

The protein resides in the cell membrane. It carries out the reaction an acyl phosphate + sn-glycerol 3-phosphate = a 1-acyl-sn-glycero-3-phosphate + phosphate. It participates in lipid metabolism; phospholipid metabolism. In terms of biological role, catalyzes the transfer of an acyl group from acyl-phosphate (acyl-PO(4)) to glycerol-3-phosphate (G3P) to form lysophosphatidic acid (LPA). This enzyme utilizes acyl-phosphate as fatty acyl donor, but not acyl-CoA or acyl-ACP. The protein is Glycerol-3-phosphate acyltransferase 2 of Dehalococcoides mccartyi (strain CBDB1).